Here is a 243-residue protein sequence, read N- to C-terminus: Transmembrane protein 174 (243 aa).

Transmembrane regions (helical) follow at residues 40 to 60 and 73 to 93; these read LLFS…MGWI and LLGP…VCKF.

In terms of assembly, interacts with SLC34A1; regulates SLC34A1 internalization by PTH and FGF23. As to expression, kidney specific. Expressed in renal primary proximal tubule cells.

Its subcellular location is the endoplasmic reticulum membrane. It localises to the apical cell membrane. In terms of biological role, regulator of plasma phosphate homeostasis. Decreases serum inorganic phosphate (Pi) uptake by regulating the sodium-phosphate cotransporter SLC34A1 trafficking by PTH and FGF23 in the kidney. The chain is Transmembrane protein 174 (Tmem174) from Mus musculus (Mouse).